The primary structure comprises 177 residues: Large ribosomal subunit protein bL9 (177 aa).

Belongs to the bacterial ribosomal protein bL9 family.

Functionally, binds to the 23S rRNA. The chain is Large ribosomal subunit protein bL9 from Rhodopirellula baltica (strain DSM 10527 / NCIMB 13988 / SH1).